Here is a 266-residue protein sequence, read N- to C-terminus: Luciferase (266 aa).

A helical transmembrane segment spans residues 22-41; that stretch reads GLATACCAVAVASAIAFPYI.

This sequence belongs to the fungal luciferase family.

The protein resides in the membrane. The enzyme catalyses 3-hydroxyhispidin + O2 = (E)-caffeoylpyruvate + hnu + CO2. The catalysed reaction is 3-hydroxyhispidin + O2 = 4-[(E)-2-(3,4-dihydroxyphenyl)ethenyl]-1,7-dihydroxy-2,3,5-trioxabicyclo[2.2.2]oct-7-en-6-one. Functionally, luciferase; part of the gene cluster that mediates the fungal bioluminescence cycle. Uses the fungal luciferin 3-hydroxyhispidin as a substrate to produce an endoperoxide as a high-energy intermediate with decomposition that yields oxyluciferin (also known as caffeoylpyruvate) and light emission. The fungal bioluminescence cycle begins with the hispidin synthetase that catalyzes the formation of hispidin which is further hydroxylated by the hispidin-3-hydroxylase, yielding the fungal luciferin 3-hydroxyhispidin. The luciferase then produces an endoperoxide as a high-energy intermediate with decomposition that yields oxyluciferin and light emission. Oxyluciferin can be recycled to caffeic acid by caffeoylpyruvate hydrolase. The sequence is that of Luciferase from Armillaria ostoyae (Armillaria root rot fungus).